The sequence spans 462 residues: MEKIVGLCKRRGFVFPSSEIYGGQGGVWDYGPMGIALKNNIAHAWWQDMTRLHDHIVGLDAAILMHPNVWRTSGHVDHFSDPLVDCTVCKSRFRADQVAVPSAGGPCPQCGGALTGVRNFNLMFSTHMGPTDERASLLYLRPETAQGIYVNYKNVLQTTRLKVPFGIAQIGKAFRNEIVTKNFIFRTCEFEQMEMQFFVRPAEDTHWFEYWCAQRWAFYQKYGVRMNHMRWRTHAAHELAHYARAACDIEYAFPMGFRELEGVHNRGDFDLTRHAQHSGKDLCYVDPDPNLDAAARRYVPCVVETSAGLTRCVLMFLCDAYTEEYVQAPNVAFSETTQTADQEGAARTGEMRIVLRLHPALSPTTVAFLPLVKKDGLVDLARAVRDELREDFACDFDAAGAIGKRYRRQDEVGTPFCVTVDYQSKEDDTVTVRLRDSMAQRRVSRAFLAEFLRTEIKHYRRP.

The substrate site is built by arginine 94 and glutamate 143. ATP contacts are provided by residues 175-177 (RNE), 185-190 (FRTCEF), 259-260 (EL), and 308-311 (GLTR). 190-194 (FEQME) provides a ligand contact to substrate. 304 to 308 (ETSAG) contributes to the substrate binding site.

The protein belongs to the class-II aminoacyl-tRNA synthetase family. In terms of assembly, homodimer.

It is found in the cytoplasm. It carries out the reaction tRNA(Gly) + glycine + ATP = glycyl-tRNA(Gly) + AMP + diphosphate. Catalyzes the attachment of glycine to tRNA(Gly). In Treponema pallidum (strain Nichols), this protein is Glycine--tRNA ligase.